The following is a 287-amino-acid chain: 4-diphosphocytidyl-2-C-methyl-D-erythritol kinase (287 aa).

Lysine 10 is a catalytic residue. An ATP-binding site is contributed by 94-104 (PVAAGLGGGSA). Aspartate 136 is a catalytic residue.

It belongs to the GHMP kinase family. IspE subfamily.

The catalysed reaction is 4-CDP-2-C-methyl-D-erythritol + ATP = 4-CDP-2-C-methyl-D-erythritol 2-phosphate + ADP + H(+). The protein operates within isoprenoid biosynthesis; isopentenyl diphosphate biosynthesis via DXP pathway; isopentenyl diphosphate from 1-deoxy-D-xylulose 5-phosphate: step 3/6. Its function is as follows. Catalyzes the phosphorylation of the position 2 hydroxy group of 4-diphosphocytidyl-2C-methyl-D-erythritol. The protein is 4-diphosphocytidyl-2-C-methyl-D-erythritol kinase of Pelotomaculum thermopropionicum (strain DSM 13744 / JCM 10971 / SI).